The primary structure comprises 319 residues: Quinolinate synthase (319 aa).

Iminosuccinate-binding residues include histidine 35 and serine 52. Cysteine 97 is a binding site for [4Fe-4S] cluster. Iminosuccinate-binding positions include tyrosine 123–asparagine 125 and serine 140. Cysteine 183 contacts [4Fe-4S] cluster. Residues histidine 209 to glutamate 211 and threonine 226 contribute to the iminosuccinate site. Cysteine 276 contributes to the [4Fe-4S] cluster binding site.

Belongs to the quinolinate synthase family. Type 2 subfamily. It depends on [4Fe-4S] cluster as a cofactor.

Its subcellular location is the cytoplasm. The enzyme catalyses iminosuccinate + dihydroxyacetone phosphate = quinolinate + phosphate + 2 H2O + H(+). The protein operates within cofactor biosynthesis; NAD(+) biosynthesis; quinolinate from iminoaspartate: step 1/1. Catalyzes the condensation of iminoaspartate with dihydroxyacetone phosphate to form quinolinate. In Microcystis aeruginosa (strain NIES-843 / IAM M-2473), this protein is Quinolinate synthase.